Reading from the N-terminus, the 69-residue chain is DNA-directed RNA polymerase subunit omega (69 aa).

It belongs to the RNA polymerase subunit omega family. As to quaternary structure, the RNAP catalytic core consists of 2 alpha, 1 beta, 1 beta' and 1 omega subunit. When a sigma factor is associated with the core the holoenzyme is formed, which can initiate transcription.

The enzyme catalyses RNA(n) + a ribonucleoside 5'-triphosphate = RNA(n+1) + diphosphate. Functionally, promotes RNA polymerase assembly. Latches the N- and C-terminal regions of the beta' subunit thereby facilitating its interaction with the beta and alpha subunits. This is DNA-directed RNA polymerase subunit omega from Heliobacterium modesticaldum (strain ATCC 51547 / Ice1).